The sequence spans 310 residues: Carbamate kinase 1 (310 aa).

In terms of assembly, homodimer (predominantly) and homotetramer.

Its subcellular location is the cytoplasm. It carries out the reaction hydrogencarbonate + NH4(+) + ATP = carbamoyl phosphate + ADP + H2O + H(+). Its pathway is metabolic intermediate metabolism; carbamoyl phosphate degradation; CO(2) and NH(3) from carbamoyl phosphate: step 1/1. Inhibited by adenosine(5')pentaphospho(5')adenosine (Ap5A), Ap6A and to a much lower extent by Ap4A. Catalyzes the reversible synthesis of carbamate and ATP from carbamoyl phosphate and ADP. Can also catalyze, although with low efficiency, the phosphorylation of bicarbonate, leading to the formation of carboxyphosphate, an unstable intermediate found in the reactions catalyzed by carbamoyl-phosphate synthase and biotin carboxylase. Can also use acetate. This Enterococcus faecium (Streptococcus faecium) protein is Carbamate kinase 1 (arcC1).